The primary structure comprises 299 residues: Riboflavin transporter ImpX (299 aa).

EamA domains lie at 6–144 (KGAL…YLLT) and 162–294 (SLYS…SIIK). Helical transmembrane passes span 7 to 27 (GALLVCLAATMWGFDGIALTP), 34 to 54 (VPFVVFILHLLPLILMSILFG), 68 to 88 (DLFFFFCVALFGGCLGTLCIV), 101 to 121 (VVTLLQKLQPIFAIILARLLL), 129 to 149 (YLFWGFLALLGGYLLTFEFHL), 158 to 178 (LLPASLYSLLAAFSFGSATVF), 202 to 222 (IMFVIVTFTSGFGDFLVATAG), 224 to 244 (WLIFVIIALTTGSGAILLYYF), 253 to 273 (VATMCELCFPISSVVFDYLIN), and 276 to 296 (VLSPVQIASAILMIISIIKIS).

It belongs to the EamA transporter family.

Its subcellular location is the cell membrane. Its function is as follows. Transports riboflavin into the cell. The polypeptide is Riboflavin transporter ImpX (Fusobacterium nucleatum subsp. nucleatum (strain ATCC 23726 / VPI 4351)).